The primary structure comprises 558 residues: Dihydroxy-acid dehydratase (558 aa).

Residue Asp78 participates in Mg(2+) binding. Residue Cys119 coordinates [2Fe-2S] cluster. Positions 120 and 121 each coordinate Mg(2+). The residue at position 121 (Lys121) is an N6-carboxylysine. Position 192 (Cys192) interacts with [2Fe-2S] cluster. Residue Glu446 coordinates Mg(2+). Ser472 serves as the catalytic Proton acceptor.

The protein belongs to the IlvD/Edd family. In terms of assembly, homodimer. Requires [2Fe-2S] cluster as cofactor. Mg(2+) serves as cofactor.

It catalyses the reaction (2R)-2,3-dihydroxy-3-methylbutanoate = 3-methyl-2-oxobutanoate + H2O. The enzyme catalyses (2R,3R)-2,3-dihydroxy-3-methylpentanoate = (S)-3-methyl-2-oxopentanoate + H2O. It participates in amino-acid biosynthesis; L-isoleucine biosynthesis; L-isoleucine from 2-oxobutanoate: step 3/4. Its pathway is amino-acid biosynthesis; L-valine biosynthesis; L-valine from pyruvate: step 3/4. Functions in the biosynthesis of branched-chain amino acids. Catalyzes the dehydration of (2R,3R)-2,3-dihydroxy-3-methylpentanoate (2,3-dihydroxy-3-methylvalerate) into 2-oxo-3-methylpentanoate (2-oxo-3-methylvalerate) and of (2R)-2,3-dihydroxy-3-methylbutanoate (2,3-dihydroxyisovalerate) into 2-oxo-3-methylbutanoate (2-oxoisovalerate), the penultimate precursor to L-isoleucine and L-valine, respectively. The sequence is that of Dihydroxy-acid dehydratase from Campylobacter jejuni subsp. doylei (strain ATCC BAA-1458 / RM4099 / 269.97).